The sequence spans 423 residues: 26S proteasome regulatory subunit 6A homolog B (423 aa).

Serine 18 carries the post-translational modification Phosphoserine. 211–218 (GPPGTGKT) contributes to the ATP binding site. Residues lysine 234, lysine 278, and lysine 415 each participate in a glycyl lysine isopeptide (Lys-Gly) (interchain with G-Cter in ubiquitin) cross-link.

Belongs to the AAA ATPase family. In terms of assembly, component of the 19S regulatory particle (RP/PA700) base subcomplex of the 26S proteasome. The 26S proteasome is composed of a core protease (CP), known as the 20S proteasome, capped at one or both ends by the 19S regulatory particle (RP/PA700). The RP/PA700 complex is composed of at least 17 different subunits in two subcomplexes, the base and the lid, which form the portions proximal and distal to the 20S proteolytic core, respectively.

The protein resides in the cytoplasm. Its subcellular location is the nucleus. The 26S proteasome is involved in the ATP-dependent degradation of ubiquitinated proteins. The regulatory (or ATPase) complex confers ATP dependency and substrate specificity to the 26S complex. The protein is 26S proteasome regulatory subunit 6A homolog B (RPT5B) of Arabidopsis thaliana (Mouse-ear cress).